The following is a 552-amino-acid chain: Thermosome subunit beta (552 aa).

Residues 531–552 (AGKKGGSEPGGKKEKEEKSSED) are disordered. Positions 540 to 552 (GGKKEKEEKSSED) are enriched in basic and acidic residues.

This sequence belongs to the TCP-1 chaperonin family. Forms a heterooligomeric complex of two stacked nine-membered rings; one of alpha and the other of beta subunits. Sometimes called a 'rosettasome'.

The protein resides in the cytoplasm. It catalyses the reaction ATP + H2O = ADP + phosphate + H(+). Molecular chaperone; binds unfolded polypeptides in vitro, stimulates protein folding and has ATPase activity. One of the most abundant proteins in the cell at all temperatures. The protein is Thermosome subunit beta (thsB) of Saccharolobus shibatae (strain ATCC 51178 / DSM 5389 / JCM 8931 / NBRC 15437 / B12) (Sulfolobus shibatae).